Here is a 351-residue protein sequence, read N- to C-terminus: Peptide chain release factor 1 (351 aa).

An N5-methylglutamine modification is found at Gln-229. The segment at 279-300 (ADAERAADRKSQVGSGDRSERI) is disordered.

The protein belongs to the prokaryotic/mitochondrial release factor family. In terms of processing, methylated by PrmC. Methylation increases the termination efficiency of RF1.

The protein resides in the cytoplasm. Its function is as follows. Peptide chain release factor 1 directs the termination of translation in response to the peptide chain termination codons UAG and UAA. This chain is Peptide chain release factor 1, found in Paracoccus denitrificans (strain Pd 1222).